Reading from the N-terminus, the 364-residue chain is Fructose-bisphosphate aldolase, non-muscle type (364 aa).

Substrate is bound by residues R56 and K147. K230 functions as the Schiff-base intermediate with dihydroxyacetone-P in the catalytic mechanism.

Belongs to the class I fructose-bisphosphate aldolase family. In terms of assembly, homotetramer. Expressed mainly in the liver and also in brain and other tissues, except for the heart muscle.

The enzyme catalyses beta-D-fructose 1,6-bisphosphate = D-glyceraldehyde 3-phosphate + dihydroxyacetone phosphate. The protein operates within carbohydrate degradation; glycolysis; D-glyceraldehyde 3-phosphate and glycerone phosphate from D-glucose: step 4/4. The polypeptide is Fructose-bisphosphate aldolase, non-muscle type (Lethenteron camtschaticum (Japanese lamprey)).